The sequence spans 336 residues: Zinc finger protein GFI1 homolog pag-3 (336 aa).

5 C2H2-type zinc fingers span residues 126–148 (FHCQ…QQVH), 154–176 (FECK…LLIH), 182–204 (YPCE…TYIH), 210–232 (HKCT…TRKH), and 238–260 (FACD…RESH). Positions 253-290 (RRRHRESHHPGHPEECVSASQISSDLSPKGYMTPPTSN) are disordered.

In terms of assembly, may interact with transcription factor unc-3. In terms of tissue distribution, expressed in the BDU neurons, the touch neurons, the VA, VB and VC motor neurons, two AVF interneurons and unidentified neurons of the retrovesicular ganglion (at protein level).

The protein resides in the nucleus. It is found in the cell projection. Its subcellular location is the axon. The protein localises to the perikaryon. In terms of biological role, transcription factor. Plays a role in the determination of neuroblast cell fate and neuronal differentiation. Negatively modulates expression of several components of dense-core vesicles (DCVs), thereby, in a DCV membrane protein ida-1-dependent manner, regulating neurosecretion. Negatively modulates the transcription of its own gene, the mechanosensory gene mec-3, and also other touch neuron-specific genes in the BDU neurons; required for coordinated movement. Required to determine the identity of BDU sensory neurons in concert with transcription factor unc-86, regulating expression of a number of genes, including transcription factors ceh-14 and ahr-1, neuropeptides flp-10, nlp-1 and nlp-15, and tyramine receptor-encoding ser-2. Acts in concert with non-canonical WNT signaling to negatively modulate transcription of mec-3 gene in BDU neurons. May act in concert with transcription factor unc-3 in motor neuron fate determination. May play a role programmed cell death. This Caenorhabditis elegans protein is Zinc finger protein GFI1 homolog pag-3.